A 508-amino-acid polypeptide reads, in one-letter code: MAP kinase kinase MKK1/SSP32 (508 aa).

Disordered regions lie at residues 1 to 21 (MASL…PRLK), 35 to 95 (IYLT…LSIN), and 130 to 158 (ELSG…YLRN). A compositionally biased stretch (polar residues) spans 35–47 (IYLTSNGSSTTAY). A compositionally biased stretch (low complexity) spans 48 to 66 (SSHTPEPLTSSTSTLFSQT). 2 stretches are compositionally biased toward polar residues: residues 67–79 (RLHP…TLNT) and 131–158 (LSGN…YLRN). Residue S192 is modified to Phosphoserine. In terms of domain architecture, Protein kinase spans 221-488 (IETLGILGEG…PRQMINHPWI (268 aa)). ATP contacts are provided by residues 227–235 (LGEGAGGSV) and K250. D349 (proton acceptor) is an active-site residue.

The protein belongs to the protein kinase superfamily. STE Ser/Thr protein kinase family. MAP kinase kinase subfamily.

The catalysed reaction is L-seryl-[protein] + ATP = O-phospho-L-seryl-[protein] + ADP + H(+). It carries out the reaction L-threonyl-[protein] + ATP = O-phospho-L-threonyl-[protein] + ADP + H(+). The enzyme catalyses L-tyrosyl-[protein] + ATP = O-phospho-L-tyrosyl-[protein] + ADP + H(+). Its function is as follows. Involved in a signal transduction pathway that play a role in yeast cell morphogenesis and cell growth. This pathway seems to start by SMP3; then involve the kinase PKC1 that may act on the BCK1 kinase that then phosphorylates MKK1 and MKK2 which themselves phosphorylate the MPK1 kinase. This is MAP kinase kinase MKK1/SSP32 (MKK1) from Saccharomyces cerevisiae (strain ATCC 204508 / S288c) (Baker's yeast).